The following is a 528-amino-acid chain: Protein phosphatase 1 regulatory subunit 16A (528 aa).

The stretch at 18 to 45 (STQERLKHAQKRRAQQVKMWAQAEKEAQ) forms a coiled coil. Positions 19–59 (TQERLKHAQKRRAQQVKMWAQAEKEAQGKKGPGERPRKEAA) are disordered. Residues 40-58 (AEKEAQGKKGPGERPRKEA) are compositionally biased toward basic and acidic residues. 5 ANK repeats span residues 70-99 (PPSVVLLEAAARNDLEEVRQFLGSGVSPDL), 103-132 (DGLTALHQCCIDDFREMVQQLLEAGANINA), 136-165 (ECWTPLHAAATCGHLHLVELLIASGANLLA), 231-260 (HGATLLHVAAANGFSEAAALLLEHRASLSA), and 264-293 (DGWEPLHAAAYWGQVPLVELLVAHGADLNA). Disordered regions lie at residues 330 to 351 (RQRSLLRRRTSSAGSRGKVVRR) and 367 to 421 (QEAI…SPVR). Residue serine 433 is modified to Phosphoserine. Residues 462–505 (QRAAAKLQRPPPEGPESPETAEPGLPGDTVTPQPDCGFRAGGDP) are disordered. Residue cysteine 524 is the site of S-palmitoyl cysteine attachment. The residue at position 525 (cysteine 525) is a Cysteine methyl ester. Cysteine 525 carries S-farnesyl cysteine lipidation. A propeptide spans 526-528 (LLM) (removed in mature form).

In terms of assembly, binds PP1.

It localises to the cell membrane. Functionally, inhibits protein phosphatase 1 activity toward phosphorylase, myosin light chain and myosin substrates. The chain is Protein phosphatase 1 regulatory subunit 16A (PPP1R16A) from Homo sapiens (Human).